The sequence spans 470 residues: Pancreatic lipase-related protein 2 (470 aa).

Positions 1 to 18 (MMLFVWTTGLLLLATARG) are cleaved as a signal peptide. A disulfide bridge links cysteine 22 with cysteine 28. A required for galactolipase activity region spans residues 94 to 106 (IHGFIDNGEKDWL). Cysteine 110 and cysteine 121 form a disulfide bridge. Catalysis depends on serine 172, which acts as the Nucleophile. The active-site Charge relay system is aspartate 196. Glutamate 207, arginine 210, aspartate 212, and aspartate 215 together coordinate Ca(2+). A disulfide bond links cysteine 257 and cysteine 281. The tract at residues 258–280 (EKNIISTIVDVNGFLEGITSLAA) is required for galactolipase activity. Catalysis depends on histidine 283, which acts as the Charge relay system. 2 cysteine pairs are disulfide-bonded: cysteine 305–cysteine 316 and cysteine 319–cysteine 324. Residues asparagine 354 and asparagine 429 are each glycosylated (N-linked (GlcNAc...) asparagine). The region spanning 358–470 (WRYKVSVTLS…EDVLQSLSPC (113 aa)) is the PLAT domain. Cysteine 454 and cysteine 470 are joined by a disulfide.

The protein belongs to the AB hydrolase superfamily. Lipase family. As to expression, pancreas.

It localises to the secreted. Its subcellular location is the zymogen granule membrane. It is found in the cell projection. The protein localises to the neuron projection. It carries out the reaction a triacylglycerol + H2O = a diacylglycerol + a fatty acid + H(+). The enzyme catalyses a 1,2-diacyl-3-O-(beta-D-galactosyl)-sn-glycerol + 2 H2O = 3-beta-D-galactosyl-sn-glycerol + 2 a fatty acid + 2 H(+). It catalyses the reaction 1,2,3-tri-(9Z-octadecenoyl)-glycerol + H2O = di-(9Z)-octadecenoylglycerol + (9Z)-octadecenoate + H(+). The catalysed reaction is di-(9Z)-octadecenoylglycerol + H2O = (9Z-octadecenoyl)-glycerol + (9Z)-octadecenoate + H(+). It carries out the reaction (9Z-octadecenoyl)-glycerol + H2O = glycerol + (9Z)-octadecenoate + H(+). The enzyme catalyses 1-(9Z-octadecenoyl)-glycerol + H2O = glycerol + (9Z)-octadecenoate + H(+). It catalyses the reaction 1,2,3-tripropanoylglycerol + H2O = dipropanoylglycerol + propanoate + H(+). The catalysed reaction is 1,2,3-tributanoylglycerol + H2O = dibutanoylglycerol + butanoate + H(+). It carries out the reaction 1,2,3-trioctanoylglycerol + H2O = dioctanoylglycerol + octanoate + H(+). The enzyme catalyses 1,2-didecanoylglycerol + H2O = decanoylglycerol + decanoate + H(+). It catalyses the reaction long chain 1,2-diacyl-3-O-beta-D-galactosyl-sn-glycerol + H2O = long chain acyl-3-O-beta-D-galactosyl-sn-glycerol + a fatty acid + H(+). The catalysed reaction is 1,2-dioctanoyl-3-O-beta-D-galactosyl-sn-glycerol + H2O = octanoyl-3-(beta-D-galactosyl)-sn-glycerol + octanoate + H(+). It carries out the reaction 1,2-didodecanoyl-3-beta-D-galactosyl-sn-glycerol + H2O = dodecanoyl-3-beta-D-galactosyl-sn-glycerol + dodecanoate + H(+). The enzyme catalyses 1-beta-D-galactosyl-2,3-didodecanoyl-sn-glycerol + H2O = 1-beta-D-galactosyl-dodecanoyl-sn-glycerol + dodecanoate + H(+). It catalyses the reaction a 1,2-diacyl-3-O-[alpha-D-galactosyl-(1-&gt;6)-beta-D-galactosyl]-sn-glycerol + H2O = acyl-3-O-[alpha-D-galactosyl-(1-&gt;6)-beta-D-galactosyl]-sn-glycerol + a fatty acid + H(+). The catalysed reaction is long chain 1,2-diacyl-3-O-[alpha-D-galactosyl-(1-&gt;6)-beta-D-galactosyl]-sn-glycerol + H2O = long chain acyl-3-O-[alpha-D-galactosyl-(1-&gt;6)-beta-D-galactosyl]-sn-glycerol + a fatty acid + H(+). It carries out the reaction 1,2-dioctanoyl-3-O-[alpha-D-galactosyl-(1-&gt;6)-beta-D-galactosyl]-sn-glycerol + H2O = octanoyl-3-O-[alpha-D-galactosyl-(1-&gt;6)-beta-D-galactosyl]-sn-glycerol + octanoate + H(+). The enzyme catalyses 1,2-didodecanoyl-3-O-[alpha-D-galactosyl-(1-&gt;6)-beta-D-galactosyl]-sn-glycerol + H2O = dodecanoyl-3-O-[alpha-D-galactosyl-(1-&gt;6)-beta-D-galactosyl]-sn-glycerol + dodecanoate + H(+). It catalyses the reaction a 1,2-diacyl-sn-glycero-3-phosphocholine + H2O = a monoacyl-sn-glycero-3-phosphocholine + a fatty acid + H(+). It functions in the pathway glycerolipid metabolism; triacylglycerol degradation. It participates in glycolipid metabolism. With respect to regulation, triacylglycerol lipase activity is inhibited by increasing bile salts concentrations and not reactivated by CLPS. Lipase that primarily hydrolyzes triglycerides and galactosylglycerides. In neonates, may play a major role in pancreatic digestion of dietary fats such as milk fat globules enriched in long-chain triglycerides. Hydrolyzes short-, medium- and long-chain fatty acyls in triglycerides without apparent positional specificity. Can completely deacylate triacylglycerols. When the liver matures and bile salt synthesis increases, likely functions mainly as a galactolipase and monoacylglycerol lipase. Hydrolyzes monogalactosyldiglycerols (MGDG) and digalactosyldiacylglycerols (DGDG) present in a plant-based diet, releasing long-chain polyunsaturated fatty acids. Hydrolyzes medium- and long-chain fatty acyls in galactolipids. May act together with LIPF to hydrolyze partially digested triglycerides. Hydrolyzes long-chain monoglycerides with high efficiency. In cytotoxic T cells, contributes to perforin-dependent cell lysis, but is unlikely to mediate direct cytotoxicity. Also has low phospholipase activity. In neurons, required for the localization of the phospholipid 1-oleoyl-2-palmitoyl-PC (OPPC) to neurite tips through acyl chain remodeling of membrane phospholipids. The resulting OPPC-rich lipid membrane domain recruits the t-SNARE protein STX4 by selectively interacting with the STX4 transmembrane domain and this promotes surface expression of the dopamine transporter SLC6A3/DAT at neurite tips by facilitating fusion of SLC6A3-containing transport vesicles with the plasma membrane. The protein is Pancreatic lipase-related protein 2 of Myocastor coypus (Coypu).